Here is an 81-residue protein sequence, read N- to C-terminus: ATP synthase subunit c, chloroplastic (81 aa).

2 consecutive transmembrane segments (helical) span residues 3–23 (PLIS…ASIG) and 57–77 (LAFM…LLFA).

Belongs to the ATPase C chain family. F-type ATPases have 2 components, F(1) - the catalytic core - and F(0) - the membrane proton channel. F(1) has five subunits: alpha(3), beta(3), gamma(1), delta(1), epsilon(1). F(0) has four main subunits: a(1), b(1), b'(1) and c(10-14). The alpha and beta chains form an alternating ring which encloses part of the gamma chain. F(1) is attached to F(0) by a central stalk formed by the gamma and epsilon chains, while a peripheral stalk is formed by the delta, b and b' chains.

It localises to the plastid. The protein resides in the chloroplast thylakoid membrane. In terms of biological role, f(1)F(0) ATP synthase produces ATP from ADP in the presence of a proton or sodium gradient. F-type ATPases consist of two structural domains, F(1) containing the extramembraneous catalytic core and F(0) containing the membrane proton channel, linked together by a central stalk and a peripheral stalk. During catalysis, ATP synthesis in the catalytic domain of F(1) is coupled via a rotary mechanism of the central stalk subunits to proton translocation. Functionally, key component of the F(0) channel; it plays a direct role in translocation across the membrane. A homomeric c-ring of between 10-14 subunits forms the central stalk rotor element with the F(1) delta and epsilon subunits. This is ATP synthase subunit c, chloroplastic from Gossypium barbadense (Sea Island cotton).